The primary structure comprises 485 residues: Trk system potassium uptake protein TrkH (485 aa).

At 1 to 2 (MQ) the chain is on the cytoplasmic side. A helical transmembrane segment spans residues 3 to 29 (FRSIIRIVGLLLALFSVTMLAPALVAL). Topologically, residues 30–35 (LYRDGA) are periplasmic. Residues 36–57 (GVPFVTTFFVLLFCGAMCWFPN) form a helical membrane-spanning segment. Over 58-65 (RRHKHELK) the chain is Cytoplasmic. The chain crosses the membrane as a helical span at residues 66-90 (SRDGFLIVVLFWTVLGSAGSLPFLI). An intramembrane region (helical; Pore-forming) is located at residues 98–109 (VTDAFFESFSAL). Residues 110–115 (TTTGAT) lie within the membrane without spanning it. The segment at 110-115 (TTTGAT) is selectivity filter part 1. Positions 111 and 112 each coordinate K(+). Over 116-124 (VIVGLDELP) the chain is Periplasmic. The helical transmembrane segment at 125–150 (KAILFYRQFLQWFGGMGIIVLAVAIL) threads the bilayer. Over 151-177 (PVLGIGGMQLYRAEIPGPVKDTKMTPR) the chain is Cytoplasmic. Residues 178–202 (IAETAKALWYIYLSLTIACAVAFWL) form a helical membrane-spanning segment. Residues 203 to 205 (AGM) lie on the Periplasmic side of the membrane. An intramembrane region is located at residue Thr-206. Residues 207–218 (PFDAISHSFSTI) constitute an intramembrane region (helical; Pore-forming). An intramembrane segment occupies 219–224 (AIGGFS). The tract at residues 219–224 (AIGGFS) is selectivity filter part 2. Residues Ile-220 and Gly-221 each coordinate K(+). The Periplasmic portion of the chain corresponds to 225–234 (THDASMGYFD). Residues 235–250 (SYAINLITVVFLLISA) constitute an intramembrane region (helical). The helical transmembrane segment at 276–296 (FRAFIFIQVLLFLVCFLLLLK) threads the bilayer. The helical; Pore-forming intramembrane region spans 303-318 (PYDAFDQALFQTVSIS). An intramembrane segment occupies 319-324 (TTAGFT). The tract at residues 319 to 324 (TTAGFT) is selectivity filter part 3. Positions 320 and 321 each coordinate K(+). The Periplasmic segment spans residues 325–332 (TTGFADWP). The segment at residues 333 to 344 (LFLPVLLLFSSF) is an intramembrane region (helical). Residues 345 to 357 (IGGCAGSTGGGMK) constitute an intramembrane region (note=Loop between two helices). A helical membrane pass occupies residues 392 to 419 (PQRVVDAVWGFFSAYALVFVVCMLGLIA). At 420–421 (TG) the chain is on the periplasmic side. The stretch at 422–423 (MD) is an intramembrane region. The segment at residues 424-434 (ELSAFSAVAAT) is an intramembrane region (helical; Pore-forming). An intramembrane segment occupies 435 to 441 (LNNLGPG). The selectivity filter part 4 stretch occupies residues 436-441 (NNLGPG). 2 residues coordinate K(+): Asn-437 and Leu-438. At 442-453 (LGEVALHFGDVN) the chain is on the periplasmic side. Residues 454-465 (DKAKWVLIVSML) constitute an intramembrane region (helical).

The protein belongs to the TrkH potassium transport family. Homodimer.

It localises to the cell inner membrane. Functionally, low-affinity potassium transport system. Interacts with trk system potassium uptake protein TrkA and requires TrkE for transport activity. Selective for permeation of potassium ion and rubidium ion over smaller ions such as natrium or litium. This Vibrio parahaemolyticus serotype O3:K6 (strain RIMD 2210633) protein is Trk system potassium uptake protein TrkH.